The following is a 427-amino-acid chain: Glutamate-1-semialdehyde 2,1-aminomutase (427 aa).

Position 265 is an N6-(pyridoxal phosphate)lysine (Lys265).

It belongs to the class-III pyridoxal-phosphate-dependent aminotransferase family. HemL subfamily. In terms of assembly, homodimer. Requires pyridoxal 5'-phosphate as cofactor.

It is found in the cytoplasm. It carries out the reaction (S)-4-amino-5-oxopentanoate = 5-aminolevulinate. The protein operates within porphyrin-containing compound metabolism; protoporphyrin-IX biosynthesis; 5-aminolevulinate from L-glutamyl-tRNA(Glu): step 2/2. The protein is Glutamate-1-semialdehyde 2,1-aminomutase of Photorhabdus laumondii subsp. laumondii (strain DSM 15139 / CIP 105565 / TT01) (Photorhabdus luminescens subsp. laumondii).